A 34-amino-acid polypeptide reads, in one-letter code: U2-theraphotoxin-Bs1a (34 aa).

3 disulfide bridges follow: Cys2–Cys16, Cys9–Cys21, and Cys15–Cys28.

In terms of tissue distribution, expressed by the venom gland.

Its subcellular location is the secreted. This is U2-theraphotoxin-Bs1a from Brachypelma smithi (Mexican red knee tarantula).